Consider the following 447-residue polypeptide: Putative metabolite transport protein HI_0418 (447 aa).

Over 1–28 (MCKPQQKHYGRQVMNTQNSLKQVATATM) the chain is Cytoplasmic. The helical transmembrane segment at 29–49 (VGTAIEYFDNYIYAMAAVLVF) threads the bilayer. Topologically, residues 50-63 (NHQFFHAVDPLSGQ) are periplasmic. The helical transmembrane segment at 64-84 (IAALSTLALTFIARPLGAILF) threads the bilayer. Residues 85 to 96 (GHFGDRFGRKNT) lie on the Cytoplasmic side of the membrane. A helical transmembrane segment spans residues 97–117 (FVMSLLLMGISTVVIGLLPTY). Over 118-119 (DS) the chain is Periplasmic. A helical transmembrane segment spans residues 120–140 (IGIWATILLCLCRIGQGIGLG). Residues 141 to 167 (GEWGGAALVAVENAPEGKRGWYGTFPQ) are Cytoplasmic-facing. A helical membrane pass occupies residues 168–188 (LGAPLGLLLANGVFLGITAIF). Residues 189 to 194 (GQEAMT) are Periplasmic-facing. The chain crosses the membrane as a helical span at residues 195–215 (EWAWRIPFLSSVILVAIGLYV). Topologically, residues 216 to 249 (RLKLTEAPIFLAALNKPKPKRLPMLEVVTTHFKP) are cytoplasmic. Residues 250–270 (FFLGMLVCIAGYVLFYIMIAF) form a helical membrane-spanning segment. Over 271–295 (SQIYAKSAPTVSEAGYAMGLGFSPQ) the chain is Periplasmic. Residues 296–316 (IFTALLMASAVSLAITIAASG) form a helical membrane-spanning segment. The Cytoplasmic portion of the chain corresponds to 317–325 (KYIDKIGRR). The chain crosses the membrane as a helical span at residues 326 to 346 (TWLIWTTVGVAIFGLSLPLFL). Over 347-354 (ENGTTTSL) the chain is Periplasmic. The helical transmembrane segment at 355–375 (FWFLFIGMGLIGMGYGPLASF) threads the bilayer. The Cytoplasmic portion of the chain corresponds to 376–390 (LPELFPTHARYSGAS). Residues 391–411 (LTYNIAGLFGASVAAIIALPL) traverse the membrane as a helical segment. Topologically, residues 412-418 (NAHYGLK) are periplasmic. Residues 419–439 (GVGIYLTLNAVLSLVGLWFIS) traverse the membrane as a helical segment. Residues 440–447 (ETKDKLLS) are Cytoplasmic-facing.

Belongs to the major facilitator superfamily. Metabolite:H+ Symporter (MHS) family (TC 2.A.1.6) family.

It is found in the cell inner membrane. In Haemophilus influenzae (strain ATCC 51907 / DSM 11121 / KW20 / Rd), this protein is Putative metabolite transport protein HI_0418.